A 120-amino-acid chain; its full sequence is Large ribosomal subunit protein bL20 (120 aa).

It belongs to the bacterial ribosomal protein bL20 family.

Functionally, binds directly to 23S ribosomal RNA and is necessary for the in vitro assembly process of the 50S ribosomal subunit. It is not involved in the protein synthesizing functions of that subunit. The protein is Large ribosomal subunit protein bL20 of Desulfitobacterium hafniense (strain DSM 10664 / DCB-2).